We begin with the raw amino-acid sequence, 328 residues long: GMP reductase (328 aa).

Cys-176 serves as the catalytic Thioimidate intermediate. Residue 205 to 228 (IIADGGIRTHGDVAKSIRFGATMV) participates in NADP(+) binding.

Belongs to the IMPDH/GMPR family. GuaC type 2 subfamily.

The enzyme catalyses IMP + NH4(+) + NADP(+) = GMP + NADPH + 2 H(+). In terms of biological role, catalyzes the irreversible NADPH-dependent deamination of GMP to IMP. It functions in the conversion of nucleobase, nucleoside and nucleotide derivatives of G to A nucleotides, and in maintaining the intracellular balance of A and G nucleotides. The protein is GMP reductase of Bacillus cereus (strain ATCC 14579 / DSM 31 / CCUG 7414 / JCM 2152 / NBRC 15305 / NCIMB 9373 / NCTC 2599 / NRRL B-3711).